A 718-amino-acid polypeptide reads, in one-letter code: Ribosome-releasing factor 2, mitochondrial (718 aa).

The transit peptide at 1-29 (MLKCAWQNGPRQSNRWLWQLSNQIWKRSY) directs the protein to the mitochondrion. The 280-residue stretch at 31–310 (SKIRNIGILA…AVNSYLPAPE (280 aa)) folds into the tr-type G domain. GTP is bound by residues 40-47 (AHIDAGKT), 104-108 (DTPGH), and 158-161 (NKMD).

Belongs to the TRAFAC class translation factor GTPase superfamily. Classic translation factor GTPase family. EF-G/EF-2 subfamily.

The protein resides in the mitochondrion. In terms of biological role, mitochondrial GTPase that mediates the disassembly of ribosomes from messenger RNA at the termination of mitochondrial protein biosynthesis. Not involved in the GTP-dependent ribosomal translocation step during translation elongation. This Drosophila erecta (Fruit fly) protein is Ribosome-releasing factor 2, mitochondrial.